Here is a 151-residue protein sequence, read N- to C-terminus: HTH-type transcriptional regulator FL11 (151 aa).

The region spanning 5 to 66 (LDEIDRRIIK…IVNPEALGYS (62 aa)) is the HTH asnC-type domain. A DNA-binding region (H-T-H motif) is located at residues 24–43 (LREISKITGLAESTIHERIK). 98–104 (ETTGDYD) serves as a coordination point for L-arginine. Residues N118, D122, and 133 to 135 (THT) contribute to the L-lysine site. L-arginine-binding positions include D122 and 133–135 (THT).

As to quaternary structure, homodimer. Binds DNA as a dimer and an octamer.

In the famine mode, FL11 forms dimers and acts as a repressor, leading to growth arrest. In the feast mode, in the presence of high concentrations of lysine or arginine, four dimers assemble into an octamer and cover the fl11 and lysine biosynthesis promoters. This leads to the inhibition of fl11 expression and lysine biosynthesis, decrease of the FL11 concentration in the cell, derepression of the target genes and activation of the metabolism. In terms of biological role, DNA-binding protein involved in the repression of transcription of a large number of genes, thereby arresting growth, in response to environmental changes. The protein is HTH-type transcriptional regulator FL11 of Pyrococcus abyssi (strain GE5 / Orsay).